The following is a 308-amino-acid chain: Ribonuclease Z (308 aa).

Zn(2+)-binding residues include H63, H65, D67, H68, H141, D212, and H270. D67 (proton acceptor) is an active-site residue.

The protein belongs to the RNase Z family. Homodimer. It depends on Zn(2+) as a cofactor.

It catalyses the reaction Endonucleolytic cleavage of RNA, removing extra 3' nucleotides from tRNA precursor, generating 3' termini of tRNAs. A 3'-hydroxy group is left at the tRNA terminus and a 5'-phosphoryl group is left at the trailer molecule.. Its function is as follows. Zinc phosphodiesterase, which displays some tRNA 3'-processing endonuclease activity. Probably involved in tRNA maturation, by removing a 3'-trailer from precursor tRNA. This is Ribonuclease Z from Pediococcus pentosaceus (strain ATCC 25745 / CCUG 21536 / LMG 10740 / 183-1w).